The following is a 432-amino-acid chain: Keratin, type I cytoskeletal 17 (432 aa).

Residues 1-24 (MTTSIRQFTSSSSIKGSSGLGGGS) form a disordered region. Residues 1–83 (MTTSIRQFTS…GGVDGLLAGG (83 aa)) are head. Residues serine 12 and serine 13 each carry the phosphoserine modification. Residue lysine 15 forms a Glycyl lysine isopeptide (Lys-Gly) (interchain with G-Cter in SUMO1); alternate linkage. A Glycyl lysine isopeptide (Lys-Gly) (interchain with G-Cter in SUMO2); alternate cross-link involves residue lysine 15. Phosphoserine occurs at positions 25, 32, and 39. Residue serine 44 is modified to Phosphoserine; by RPS6KA1. The segment at 84–120 (EKATMQNLNDRLASYLDKVRALEEANTELEVKIRDWY) is coil 1A. In terms of domain architecture, IF rod spans 84-395 (EKATMQNLND…RLLEGEDAHL (312 aa)). The segment at 102–116 (VRALEEANTELEVKI) is peptide epitope S1; induces T-cell and keratinocyte proliferation and IFN-gamma production. At threonine 110 the chain carries Phosphothreonine. A linker 1 region spans residues 121–138 (QRQAPGPARDYSQYYRTI). Residues 139-230 (EELQNKILTA…NHEEEMNALR (92 aa)) are coil 1B. The segment at 153-167 (ANILLQIDNARLAAD) is peptide epitope S2; induces T-cell proliferation and IFN-gamma production. The interval 231-250 (GQVGGEINVEMDAAPGVDLS) is linker 12. A coil 2 region spans residues 251 to 392 (RILNEMRDQY…TYRRLLEGED (142 aa)). Lysine 278 participates in a covalent cross-link: Glycyl lysine isopeptide (Lys-Gly) (interchain with G-Cter in SUMO2). Phosphothreonine is present on threonine 279. Serine 323 is modified (phosphoserine). Positions 332–346 (ENRYCVQLSQIQGLI) are peptide epitope S4; induces T-cell and keratinocyte proliferation and IFN-gamma production. The tail stretch occupies residues 393–432 (AHLTQYKKEPVTTRQVRTIVEEVQDGKVISSREQVHQTTR). Residues lysine 399, lysine 400, and lysine 419 each participate in a glycyl lysine isopeptide (Lys-Gly) (interchain with G-Cter in SUMO1); alternate cross-link. Glycyl lysine isopeptide (Lys-Gly) (interchain with G-Cter in SUMO2); alternate cross-links involve residues lysine 399, lysine 400, and lysine 419.

Belongs to the intermediate filament family. In terms of assembly, heterodimer of a type I and a type II keratin. KRT17 associates with KRT6 isomers (KRT6A or KRT6B). Interacts with TRADD and SFN. Post-translationally, phosphorylation at Ser-44 occurs in a growth- and stress-dependent fashion in skin keratinocytes, it has no effect on filament organization. Expressed in the outer root sheath and medulla region of hair follicle specifically from eyebrow and beard, digital pulp, nail matrix and nail bed epithelium, mucosal stratified squamous epithelia and in basal cells of oral epithelium, palmoplantar epidermis and sweat and mammary glands. Also expressed in myoepithelium of prostate, basal layer of urinary bladder, cambial cells of sebaceous gland and in exocervix (at protein level).

The protein resides in the cytoplasm. In terms of biological role, type I keratin involved in the formation and maintenance of various skin appendages, specifically in determining shape and orientation of hair. Required for the correct growth of hair follicles, in particular for the persistence of the anagen (growth) state. Modulates the function of TNF-alpha in the specific context of hair cycling. Regulates protein synthesis and epithelial cell growth through binding to the adapter protein SFN and by stimulating Akt/mTOR pathway. Involved in tissue repair. May be a marker of basal cell differentiation in complex epithelia and therefore indicative of a certain type of epithelial 'stem cells'. Acts as a promoter of epithelial proliferation by acting a regulator of immune response in skin: promotes Th1/Th17-dominated immune environment contributing to the development of basaloid skin tumors. May act as an autoantigen in the immunopathogenesis of psoriasis, with certain peptide regions being a major target for autoreactive T-cells and hence causing their proliferation. In Homo sapiens (Human), this protein is Keratin, type I cytoskeletal 17 (KRT17).